The following is a 312-amino-acid chain: tRNA uridine(34) hydroxylase (312 aa).

A Rhodanese domain is found at 130-225; that stretch reads RGDEVVFFDG…YGEQFGNKGL (96 aa). C185 functions as the Cysteine persulfide intermediate in the catalytic mechanism.

This sequence belongs to the TrhO family.

It carries out the reaction uridine(34) in tRNA + AH2 + O2 = 5-hydroxyuridine(34) in tRNA + A + H2O. Functionally, catalyzes oxygen-dependent 5-hydroxyuridine (ho5U) modification at position 34 in tRNAs. This chain is tRNA uridine(34) hydroxylase, found in Corynebacterium glutamicum (strain ATCC 13032 / DSM 20300 / JCM 1318 / BCRC 11384 / CCUG 27702 / LMG 3730 / NBRC 12168 / NCIMB 10025 / NRRL B-2784 / 534).